We begin with the raw amino-acid sequence, 210 residues long: Thymidylate kinase (210 aa).

Position 10 to 17 (G10 to S17) interacts with ATP.

This sequence belongs to the thymidylate kinase family.

The catalysed reaction is dTMP + ATP = dTDP + ADP. Its function is as follows. Phosphorylation of dTMP to form dTDP in both de novo and salvage pathways of dTTP synthesis. This chain is Thymidylate kinase, found in Haemophilus influenzae (strain PittEE).